We begin with the raw amino-acid sequence, 203 residues long: Urease accessory protein UreG (203 aa).

A GTP-binding site is contributed by 12-19 (GPVGSGKT).

The protein belongs to the SIMIBI class G3E GTPase family. UreG subfamily. In terms of assembly, homodimer. UreD, UreF and UreG form a complex that acts as a GTP-hydrolysis-dependent molecular chaperone, activating the urease apoprotein by helping to assemble the nickel containing metallocenter of UreC. The UreE protein probably delivers the nickel.

It localises to the cytoplasm. Its function is as follows. Facilitates the functional incorporation of the urease nickel metallocenter. This process requires GTP hydrolysis, probably effectuated by UreG. This Nitrosococcus oceani (strain ATCC 19707 / BCRC 17464 / JCM 30415 / NCIMB 11848 / C-107) protein is Urease accessory protein UreG.